The following is a 309-amino-acid chain: Homoserine O-succinyltransferase (309 aa).

Cys142 serves as the catalytic Acyl-thioester intermediate. The substrate site is built by Lys163 and Ser192. His235 (proton acceptor) is an active-site residue. Glu237 is a catalytic residue. Arg249 lines the substrate pocket.

This sequence belongs to the MetA family. In terms of assembly, homodimer.

It localises to the cytoplasm. It catalyses the reaction L-homoserine + succinyl-CoA = O-succinyl-L-homoserine + CoA. It functions in the pathway amino-acid biosynthesis; L-methionine biosynthesis via de novo pathway; O-succinyl-L-homoserine from L-homoserine: step 1/1. In terms of biological role, transfers a succinyl group from succinyl-CoA to L-homoserine, forming succinyl-L-homoserine. This Salmonella arizonae (strain ATCC BAA-731 / CDC346-86 / RSK2980) protein is Homoserine O-succinyltransferase.